A 535-amino-acid polypeptide reads, in one-letter code: KNR4/SMI1 homolog (535 aa).

Over residues 354–363 (ERKLPEEPKR) the composition is skewed to basic and acidic residues. Residues 354–535 (ERKLPEEPKR…LKDDFENVAL (182 aa)) form a disordered region. 3 stretches are compositionally biased toward polar residues: residues 364–384 (TVSSSQGSQNTVEPAEQQETA), 397–407 (TSLSVDNTGTK), and 456–469 (ESTNAVENTETSQE). The segment covering 474 to 483 (TSEKPEEKPK) has biased composition (basic and acidic residues). Residues 484 to 494 (KQSKKASKKKG) show a composition bias toward basic residues. 2 stretches are compositionally biased toward basic and acidic residues: residues 495–509 (KKDEKKDTDSKTKEP) and 524–535 (EKLKDDFENVAL).

It belongs to the KNR4/SMI1 family.

The polypeptide is KNR4/SMI1 homolog (Kluyveromyces lactis (strain ATCC 8585 / CBS 2359 / DSM 70799 / NBRC 1267 / NRRL Y-1140 / WM37) (Yeast)).